Here is a 140-residue protein sequence, read N- to C-terminus: Lipoprotein MlpG (140 aa).

The signal sequence occupies residues 1 to 17 (MKIINILFCLFLLMLNG). Residue cysteine 18 is the site of N-palmitoyl cysteine attachment. The S-diacylglycerol cysteine moiety is linked to residue cysteine 18. The interval 22–57 (DTNTKQTKSRQKRDLTQKEATQEKPKSKSKEDLLRE) is disordered. Positions 33–57 (KRDLTQKEATQEKPKSKSKEDLLRE) are enriched in basic and acidic residues.

The protein belongs to the Multicopy lipoprotein (Mlp) family.

It is found in the cell outer membrane. Functionally, an outer membrane protein that may participate in pathogenesis. Some human Lyme disease patients have antibodies against this protein. The Mlp proteins probably undergo intragenic recombination, generating new alleles. The protein is Lipoprotein MlpG of Borreliella burgdorferi (strain ATCC 35210 / DSM 4680 / CIP 102532 / B31) (Borrelia burgdorferi).